A 471-amino-acid polypeptide reads, in one-letter code: 3-isopropylmalate dehydratase large subunit (471 aa).

3 residues coordinate [4Fe-4S] cluster: cysteine 347, cysteine 409, and cysteine 412.

The protein belongs to the aconitase/IPM isomerase family. LeuC type 1 subfamily. Heterodimer of LeuC and LeuD. [4Fe-4S] cluster serves as cofactor.

It catalyses the reaction (2R,3S)-3-isopropylmalate = (2S)-2-isopropylmalate. It participates in amino-acid biosynthesis; L-leucine biosynthesis; L-leucine from 3-methyl-2-oxobutanoate: step 2/4. Its function is as follows. Catalyzes the isomerization between 2-isopropylmalate and 3-isopropylmalate, via the formation of 2-isopropylmaleate. The sequence is that of 3-isopropylmalate dehydratase large subunit from Buchnera aphidicola subsp. Rhopalosiphum padi.